The chain runs to 91 residues: Small ribosomal subunit protein uS15 (91 aa).

Belongs to the universal ribosomal protein uS15 family. Part of the 30S ribosomal subunit. Forms a bridge to the 50S subunit in the 70S ribosome, contacting the 23S rRNA.

Functionally, one of the primary rRNA binding proteins, it binds directly to 16S rRNA where it helps nucleate assembly of the platform of the 30S subunit by binding and bridging several RNA helices of the 16S rRNA. Its function is as follows. Forms an intersubunit bridge (bridge B4) with the 23S rRNA of the 50S subunit in the ribosome. In Rickettsia akari (strain Hartford), this protein is Small ribosomal subunit protein uS15.